Consider the following 454-residue polypeptide: Guanine deaminase (454 aa).

Positions 82 and 84 each coordinate Zn(2+). Substrate contacts are provided by residues 84 to 87, 213 to 214, 240 to 243, and aspartate 330; these read HAPQ, RF, and HISE. 2 residues coordinate Zn(2+): histidine 240 and aspartate 330. Serine 453 is modified (phosphoserine).

Belongs to the metallo-dependent hydrolases superfamily. ATZ/TRZ family. Homodimer. It depends on Zn(2+) as a cofactor.

It carries out the reaction guanine + H2O + H(+) = xanthine + NH4(+). The protein operates within purine metabolism; guanine degradation; xanthine from guanine: step 1/1. Functionally, catalyzes the hydrolytic deamination of guanine, producing xanthine and ammonia. This Rattus norvegicus (Rat) protein is Guanine deaminase (Gda).